We begin with the raw amino-acid sequence, 179 residues long: Large ribosomal subunit protein uL5 (179 aa).

The protein belongs to the universal ribosomal protein uL5 family. As to quaternary structure, part of the 50S ribosomal subunit; part of the 5S rRNA/L5/L18/L25 subcomplex. Contacts the 5S rRNA and the P site tRNA. Forms a bridge to the 30S subunit in the 70S ribosome.

Its function is as follows. This is one of the proteins that bind and probably mediate the attachment of the 5S RNA into the large ribosomal subunit, where it forms part of the central protuberance. In the 70S ribosome it contacts protein S13 of the 30S subunit (bridge B1b), connecting the 2 subunits; this bridge is implicated in subunit movement. Contacts the P site tRNA; the 5S rRNA and some of its associated proteins might help stabilize positioning of ribosome-bound tRNAs. The polypeptide is Large ribosomal subunit protein uL5 (Alkalilimnicola ehrlichii (strain ATCC BAA-1101 / DSM 17681 / MLHE-1)).